The primary structure comprises 658 residues: MIKSQKEYLERIAYLNTLSHHYYNLDESIVSDAVYDELYQELKAYEEKNPNDIQANSPTQKVGATATNSFNKNPHLMRMWSLDDVFNQSELQAWLQRILKTYPSASFVCSPKLDGVSLNLLYQHGKLVSATTRGNGLEGELVTNNAKHIANIPHFIAYDGEIEIRGEVIISKEDFDALNKERLNANEPLFANPRNAASGSLRQLDSEITKKRKLQFIPWGVGKHSLNFLSFKECLDFIVSLGFSAIQYLNLNKNHQEIEENYHTLIREREGFFALLDGMVIVVNELNIQKELGYTQKSPKFACAYKFPALEKHTKIVGVINQVGRSGAITPVALLEPVEIAGAMINRATLHNYSEIEKKNIMLNDKVVVIRSGDVIPKIIKPLETYRDGSQQKIMRPKVCPICSHELLCEEIFTYCQNLNCPARLKESLIHFASKDALNIQGLGDKVIEQLFEEKLIVNALDLYALKLEDLMRLDKFKIKKAQNLLDAIQKSKNPPLWRLINALGIEHIGKGASKTLAKYGLNVLEKSEAEFLEMEGFGVEMVRSLVNFYASNQEFIRSLFELLNPKNSDMAEEKQESSSVFNNKTIVLTGTLSKPRQEYAQMLENLGAKITSSVSAKTDFLIVGENAGSKLALAKKHGVSVLNEEELLKRLKKLDQN.

NAD(+) contacts are provided by residues 32–36 (DAVYD) and 81–82 (SL). Lys-112 functions as the N6-AMP-lysine intermediate in the catalytic mechanism. Residues Arg-133, Glu-167, and Lys-306 each contribute to the NAD(+) site. The Zn(2+) site is built by Cys-400, Cys-403, Cys-416, and Cys-421. A BRCT domain is found at 577 to 658 (ESSSVFNNKT…LKRLKKLDQN (82 aa)).

Belongs to the NAD-dependent DNA ligase family. LigA subfamily. Requires Mg(2+) as cofactor. It depends on Mn(2+) as a cofactor.

It catalyses the reaction NAD(+) + (deoxyribonucleotide)n-3'-hydroxyl + 5'-phospho-(deoxyribonucleotide)m = (deoxyribonucleotide)n+m + AMP + beta-nicotinamide D-nucleotide.. Its function is as follows. DNA ligase that catalyzes the formation of phosphodiester linkages between 5'-phosphoryl and 3'-hydroxyl groups in double-stranded DNA using NAD as a coenzyme and as the energy source for the reaction. It is essential for DNA replication and repair of damaged DNA. This chain is DNA ligase, found in Helicobacter pylori (strain G27).